The primary structure comprises 178 residues: Sec-independent protein translocase protein TatB (178 aa).

Residues 2-22 (LPEIGAAELLIIAAVALIVVG) form a helical membrane-spanning segment. Residues 104–178 (HSPTGYENTV…KARKTAGSAE (75 aa)) are disordered. Residues 114-131 (EPPPPEPEPQPAAEPAPK) are compositionally biased toward pro residues. Residues 141–154 (PKAAAAPKAAAKPK) show a composition bias toward low complexity.

This sequence belongs to the TatB family. In terms of assembly, the Tat system comprises two distinct complexes: a TatABC complex, containing multiple copies of TatA, TatB and TatC subunits, and a separate TatA complex, containing only TatA subunits. Substrates initially bind to the TatABC complex, which probably triggers association of the separate TatA complex to form the active translocon.

The protein localises to the cell inner membrane. Part of the twin-arginine translocation (Tat) system that transports large folded proteins containing a characteristic twin-arginine motif in their signal peptide across membranes. Together with TatC, TatB is part of a receptor directly interacting with Tat signal peptides. TatB may form an oligomeric binding site that transiently accommodates folded Tat precursor proteins before their translocation. The chain is Sec-independent protein translocase protein TatB from Phenylobacterium zucineum (strain HLK1).